A 567-amino-acid polypeptide reads, in one-letter code: Unguisins hydrolase ungD (567 aa).

This sequence belongs to the peptidase S12 family.

The protein operates within secondary metabolite biosynthesis. In terms of biological role, hydrolase; part of the gene cluster that mediates the biosynthesis of the unguisins, gamma-aminobutyric acid (GABA)-containing fungal cyclic heptapeptides with the amino acid sequence cyclo-(D-Ala1-D-Val2-L-Phe3-D-Val4-D-Ala5-D-Trp6-GABA7) for unguisin A and cyclo-(D-Ala1-D-Val2-L-Leu3-D-Val4-D-Ala5-D-Trp6-GABA7) for unguisin B. Within the pathway, the hydrolase ungD catalyzes the hydrolysis between the D-tryptophan and GABA residues of unguisins A and B to produce the corresponding linear peptides. The alanine racemase ungC catalyzes the interconversion of L-alanine and D-alanine, providing the D-alanine which is accepted by the first adenylation domain of the nonribosomal peptide synthetase (NRPS) ungA. UngA is the main enzyme within the cluster which condenses the 7 residues using its respective 7 modules. The terminal condensation domain (Ct) is involved in cyclization with D-alanine and thereby releasing of unguisins A and B. The polypeptide is Unguisins hydrolase ungD (Aspergillus violaceofuscus (strain CBS 115571)).